The primary structure comprises 138 residues: Cysteine desulfuration protein SufE (138 aa).

Cysteine 51 (cysteine persulfide intermediate) is an active-site residue.

It belongs to the SufE family. In terms of assembly, homodimer. Interacts with SufS.

It is found in the cytoplasm. Its pathway is cofactor biosynthesis; iron-sulfur cluster biosynthesis. In terms of biological role, participates in cysteine desulfuration mediated by SufS. Cysteine desulfuration mobilizes sulfur from L-cysteine to yield L-alanine and constitutes an essential step in sulfur metabolism for biosynthesis of a variety of sulfur-containing biomolecules. Functions as a sulfur acceptor for SufS, by mediating the direct transfer of the sulfur atom from the S-sulfanylcysteine of SufS, an intermediate product of cysteine desulfuration process. The sequence is that of Cysteine desulfuration protein SufE from Sodalis glossinidius (strain morsitans).